Reading from the N-terminus, the 468-residue chain is H(+)/Cl(-) exchange transporter ClcA (468 aa).

Residues 1 to 30 (MSTRETFKISLLAKMPKDVINQFLSKDKTP) are Cytoplasmic-facing. A helical membrane pass occupies residues 31-67 (FSVLFLSLLVGILAGLVGTYFEQAVHLVSETRTDWLK). The Periplasmic segment spans residues 68–74 (SEIGSFL). The helical transmembrane segment at 75 to 98 (PLWLAAFLISAFLAFIGYFLVHRF) threads the bilayer. The Selectivity filter part_1 motif lies at 104 to 108 (GSGIP). Residue Ser105 coordinates chloride. Positions 107-114 (IPEIEGAM) form an intramembrane region, helical. At 115–121 (DGMRPVR) the chain is on the cytoplasmic side. The next 2 helical transmembrane spans lie at 122-139 (WWRVLPVKFFGGMGALGS) and 146-164 (EGPTVQMGGAVGRMISDIF). Positions 144–148 (GREGP) match the Selectivity filter part_2 motif. Topologically, residues 165 to 174 (RVKNEDTRHS) are cytoplasmic. 2 consecutive intramembrane regions (helical) follow at residues 175-187 (LLAAGAAGGLAAA) and 191-199 (PLAGIMFVI). The Cytoplasmic portion of the chain corresponds to 200–212 (EEMRPQFRYTLIS). Residues 213 to 230 (VRAVIISAVAANIVFRVI) traverse the membrane as a helical segment. Residues 231–250 (NGQDAVITMPQYDAPELSTL) are Periplasmic-facing. The chain crosses the membrane as a helical span at residues 251–279 (GLFLLLGALFGVFGVLFNYLITLAQDLFV). At 280 to 285 (KFHRND) the chain is on the cytoplasmic side. A helical membrane pass occupies residues 286 to 307 (RKRYLLTGSMIGGCFGLLLLYV). Topologically, residues 308 to 327 (PELTGGGISLIPTITNGGYG) are periplasmic. 2 consecutive transmembrane segments (helical) span residues 328–347 (AGILLLLFVGRIFTTLLCFG) and 353–374 (GIFAPMLALGTLFGYAFGLIAK). The Selectivity filter part_3 motif lies at 353–357 (GIFAP). Residues Ile354 and Phe355 each coordinate chloride. The Periplasmic segment spans residues 375–384 (VWFPELNIEP). Positions 385–399 (GMFAIAGMGALFAAT) form an intramembrane region, helical. Residues 400–402 (VRA) constitute an intramembrane region (note=Loop between two helices). The helical intramembrane region spans 403 to 414 (PITGILLVIEMT). The note=Loop between two helices intramembrane region spans 415 to 419 (NNYHL). A helical membrane pass occupies residues 420–436 (ILPLIITSLGAVIFAQL). At 437 to 468 (LGGQPIYSQLLHRTLKNQKLQQQDLPPQSPNS) the chain is on the cytoplasmic side. Tyr443 provides a ligand contact to chloride.

This sequence belongs to the chloride channel (TC 2.A.49) family. ClcA subfamily. In terms of assembly, homodimer.

The protein resides in the cell inner membrane. The catalysed reaction is 2 chloride(in) + H(+)(out) = 2 chloride(out) + H(+)(in). Its function is as follows. Proton-coupled chloride transporter. Functions as antiport system and exchanges two chloride ions for 1 proton. Probably acts as an electrical shunt for an outwardly-directed proton pump that is linked to amino acid decarboxylation, as part of the extreme acid resistance (XAR) response. In Vibrio cholerae serotype O1 (strain ATCC 39541 / Classical Ogawa 395 / O395), this protein is H(+)/Cl(-) exchange transporter ClcA.